The chain runs to 271 residues: Tryptophan synthase alpha chain (271 aa).

Catalysis depends on proton acceptor residues Glu49 and Asp60.

This sequence belongs to the TrpA family. In terms of assembly, tetramer of two alpha and two beta chains.

The enzyme catalyses (1S,2R)-1-C-(indol-3-yl)glycerol 3-phosphate + L-serine = D-glyceraldehyde 3-phosphate + L-tryptophan + H2O. The protein operates within amino-acid biosynthesis; L-tryptophan biosynthesis; L-tryptophan from chorismate: step 5/5. Its function is as follows. The alpha subunit is responsible for the aldol cleavage of indoleglycerol phosphate to indole and glyceraldehyde 3-phosphate. This Blochmanniella floridana protein is Tryptophan synthase alpha chain.